We begin with the raw amino-acid sequence, 90 residues long: Acylphosphatase (90 aa).

The Acylphosphatase-like domain maps to 5–90 (SYLFNVKGKV…WQELTDFKMY (86 aa)). Active-site residues include Arg20 and Asn38.

The protein belongs to the acylphosphatase family.

It catalyses the reaction an acyl phosphate + H2O = a carboxylate + phosphate + H(+). The chain is Acylphosphatase (acyP) from Aliivibrio fischeri (strain ATCC 700601 / ES114) (Vibrio fischeri).